A 282-amino-acid polypeptide reads, in one-letter code: tRNA pseudouridine synthase B (282 aa).

Residue Asp-39 is the Nucleophile of the active site.

This sequence belongs to the pseudouridine synthase TruB family. Type 1 subfamily.

It carries out the reaction uridine(55) in tRNA = pseudouridine(55) in tRNA. Responsible for synthesis of pseudouridine from uracil-55 in the psi GC loop of transfer RNAs. The polypeptide is tRNA pseudouridine synthase B (Borreliella burgdorferi (strain ATCC 35210 / DSM 4680 / CIP 102532 / B31) (Borrelia burgdorferi)).